The sequence spans 734 residues: Subtilisin-like protease (734 aa).

The signal sequence occupies residues 1 to 20 (MTCICIFSIAFLLSFHLTTA). In terms of domain architecture, Inhibitor I9 spans 28-109 (TYIVHVDKPD…AKLEKVLTLH (82 aa)). Residues 114–591 (PNFLGLYQNM…AGHVNPSKAS (478 aa)) form the Peptidase S8 domain. Asp-141 functions as the Charge relay system in the catalytic mechanism. Asn-172 carries an N-linked (GlcNAc...) asparagine glycan. His-199 functions as the Charge relay system in the catalytic mechanism. Residues Asn-222 and Asn-306 are each glycosylated (N-linked (GlcNAc...) asparagine). The 86-residue stretch at 357–442 (PLVYPGTSDE…THVGYAAGEM (86 aa)) folds into the PA domain. Residues Asn-448 and Asn-509 are each glycosylated (N-linked (GlcNAc...) asparagine). Ser-524 acts as the Charge relay system in catalysis. N-linked (GlcNAc...) asparagine glycosylation occurs at Asn-652.

The protein belongs to the peptidase S8 family.

It localises to the secreted. The protein resides in the extracellular space. It is found in the apoplast. Functionally, required for arbuscular mycorrhiza (AM) development during AM symbiosis with AM fungi (e.g. Glomeromycota intraradices). This chain is Subtilisin-like protease, found in Petunia hybrida (Petunia).